The chain runs to 251 residues: MMVIPAVDIKGGKCVRLLQGDMNAETVFSDDPGAMAERWAEAGAELIHVVDLDGAIEKSPRNLKAISALIRRVGVPVQVGGGIREIDTVKMYADLGVARIVIGSAAVNHPDLVTAACREFPGRIVLGIDARDGRVATEGWTSTTDIAAADLAARFEGCGVAAINFTDIHRDGMRTGPNIPAIEAFARATAIPVVASGGVSTIDDIQALLGIQEFGVTGVITGRALYDGTLDLAEAIAVASAGDSTSQKSVG.

The active-site Proton acceptor is aspartate 8. The active-site Proton donor is aspartate 129.

It belongs to the HisA/HisF family.

It localises to the cytoplasm. The enzyme catalyses 1-(5-phospho-beta-D-ribosyl)-5-[(5-phospho-beta-D-ribosylamino)methylideneamino]imidazole-4-carboxamide = 5-[(5-phospho-1-deoxy-D-ribulos-1-ylimino)methylamino]-1-(5-phospho-beta-D-ribosyl)imidazole-4-carboxamide. The protein operates within amino-acid biosynthesis; L-histidine biosynthesis; L-histidine from 5-phospho-alpha-D-ribose 1-diphosphate: step 4/9. This is 1-(5-phosphoribosyl)-5-[(5-phosphoribosylamino)methylideneamino] imidazole-4-carboxamide isomerase from Desulfosudis oleivorans (strain DSM 6200 / JCM 39069 / Hxd3) (Desulfococcus oleovorans).